Consider the following 595-residue polypeptide: Adenine deaminase 2 (595 aa).

Belongs to the metallo-dependent hydrolases superfamily. Adenine deaminase family. Requires Mn(2+) as cofactor.

It catalyses the reaction adenine + H2O + H(+) = hypoxanthine + NH4(+). This Rhizobium etli (strain ATCC 51251 / DSM 11541 / JCM 21823 / NBRC 15573 / CFN 42) protein is Adenine deaminase 2.